A 779-amino-acid polypeptide reads, in one-letter code: Putative helicase V13 (779 aa).

The SF3 helicase domain occupies D477–K642. G504–S511 contributes to the ATP binding site.

The sequence is that of Putative helicase V13 from Acanthamoeba polyphaga (Amoeba).